A 207-amino-acid chain; its full sequence is 3-isopropylmalate dehydratase small subunit (207 aa).

This sequence belongs to the LeuD family. LeuD type 1 subfamily. Heterodimer of LeuC and LeuD.

The catalysed reaction is (2R,3S)-3-isopropylmalate = (2S)-2-isopropylmalate. It participates in amino-acid biosynthesis; L-leucine biosynthesis; L-leucine from 3-methyl-2-oxobutanoate: step 2/4. Catalyzes the isomerization between 2-isopropylmalate and 3-isopropylmalate, via the formation of 2-isopropylmaleate. This Acidithiobacillus ferrooxidans (strain ATCC 23270 / DSM 14882 / CIP 104768 / NCIMB 8455) (Ferrobacillus ferrooxidans (strain ATCC 23270)) protein is 3-isopropylmalate dehydratase small subunit.